The chain runs to 362 residues: Tyrosine recombinase XerH (362 aa).

The Core-binding (CB) domain occupies 43–140 (ECLNELNQAC…ALLGLFSYID (98 aa)). The region spanning 170–357 (KLPTHLNNEE…DKQRLEEAAS (188 aa)) is the Tyr recombinase domain. Active-site residues include Arg213, Lys239, His309, Arg312, and His335. The O-(3'-phospho-DNA)-tyrosine intermediate role is filled by Tyr344.

The protein belongs to the 'phage' integrase family. XerH subfamily.

It is found in the cytoplasm. With respect to regulation, ftsK is required for recombination. In terms of biological role, site-specific tyrosine recombinase, which acts by catalyzing the cutting and rejoining of the recombining DNA molecules. Involved in chromosome segregation. May contribute to chromosome decatenation. The polypeptide is Tyrosine recombinase XerH (Helicobacter pylori (strain ATCC 700392 / 26695) (Campylobacter pylori)).